The primary structure comprises 333 residues: Homeobox protein Nkx-3.2 (333 aa).

2 disordered regions span residues 74 to 121 and 137 to 212; these read PART…RARV and DLEE…SRAA. Basic and acidic residues predominate over residues 137–148; it reads DLEEEAPVRSDS. Residues 179–191 are compositionally biased toward gly residues; the sequence is GAAGSGASGGQAG. A DNA-binding region (homeobox) is located at residues 206–265; sequence KKRSRAAFSHAQVFELERRFNHQRYLSGPERADLAASLKLTETQVKIWFQNRRYKTKRRQ.

Belongs to the NK-3 homeobox family. In terms of tissue distribution, expressed widely in mesoderm at the gastroduodenal junction (at protein level). Expressed in visceral mesoderm and embryonic skeleton. Expression is restricted to immature proliferative chondrocytes during endochondral ossification.

Its subcellular location is the nucleus. Transcriptional repressor that acts as a negative regulator of chondrocyte maturation. PLays a role in distal stomach development; required for proper antral-pyloric morphogenesis and development of antral-type epithelium. In concert with GSC, defines the structural components of the middle ear; required for tympanic ring and gonium development and in the regulation of the width of the malleus. The protein is Homeobox protein Nkx-3.2 (Nkx3-2) of Mus musculus (Mouse).